Consider the following 207-residue polypeptide: Recombination protein RecR (207 aa).

The C4-type zinc-finger motif lies at 60-75 (CRRCHNISDSGVCTIC). The region spanning 83–178 (STLCVVENIR…RVSVIARGIA (96 aa)) is the Toprim domain.

This sequence belongs to the RecR family.

In terms of biological role, may play a role in DNA repair. It seems to be involved in an RecBC-independent recombinational process of DNA repair. It may act with RecF and RecO. In Porphyromonas gingivalis (strain ATCC 33277 / DSM 20709 / CIP 103683 / JCM 12257 / NCTC 11834 / 2561), this protein is Recombination protein RecR.